A 354-amino-acid chain; its full sequence is MSKVKSITRESWILSTFPEWGSWLNEEIEQEQVAPGTFAMWWLGCTGIWLKSEGGANVCVDFWCGTGKQSHGNPLMKQGHQMQRMAGVKKLQPNLRTTPFVLDPFAIRQIDAVLATHDHNDHIDVNVAAAVMQNCADDVPFIGPKTCVDLWIGWGVPKERCIVVKPGDVVKVKDIEIHALDAFDRTALITLPADQKAAGVLPDGMDDRAVNYLFKTPGGTLYHSGDSHYSNYYAKHGNEHQIDVALGSYGENPRGITDKMTSADILRMGEALNAKVVIPFHHDIWSNFQADPQEIRVLWEMKKDRLKYGFKPFIWQVGGKFTWPLDKDNFEYHYPRGFDDCFTIEPDLPFKSFL.

The protein belongs to the UlaG family. A divalent metal cation is required as a cofactor.

It localises to the cytoplasm. The catalysed reaction is L-ascorbate 6-phosphate + H2O = 3-dehydro-L-gulonate 6-phosphate. Its pathway is cofactor degradation; L-ascorbate degradation; D-xylulose 5-phosphate from L-ascorbate: step 1/4. Functionally, probably catalyzes the hydrolysis of L-ascorbate-6-P into 3-keto-L-gulonate-6-P. Is essential for L-ascorbate utilization under anaerobic conditions. The protein is Probable L-ascorbate-6-phosphate lactonase UlaG of Escherichia coli O45:K1 (strain S88 / ExPEC).